The chain runs to 586 residues: Glutamate--tRNA ligase (586 aa).

Residues Leu-84–Gln-111 are disordered. Positions Thr-85–Asp-94 are enriched in acidic residues. The 'HIGH' region signature appears at Pro-119–His-129.

The protein belongs to the class-I aminoacyl-tRNA synthetase family. Glutamate--tRNA ligase type 2 subfamily.

It localises to the cytoplasm. It carries out the reaction tRNA(Glu) + L-glutamate + ATP = L-glutamyl-tRNA(Glu) + AMP + diphosphate. Its function is as follows. Catalyzes the attachment of glutamate to tRNA(Glu) in a two-step reaction: glutamate is first activated by ATP to form Glu-AMP and then transferred to the acceptor end of tRNA(Glu). This is Glutamate--tRNA ligase from Haloquadratum walsbyi (strain DSM 16790 / HBSQ001).